The primary structure comprises 156 residues: MALEKSLALLPLLVLVLLVLGWVQPSLGKESRAKKFQRQHMDSDGSPSSNPTYCNDMMKRRNMTQGRCKPVNTFVHEPLVDVQDVCFQENVTCKNGQANCYKSSSSMHITDCRLTNGSRYPNCAYRTSQKERHIIVACEGNPYVPVHFDASVEDST.

Residues 1-28 form the signal peptide; it reads MALEKSLALLPLLVLVLLVLGWVQPSLG. The segment covering 33 to 43 has biased composition (basic and acidic residues); sequence AKKFQRQHMDS. The interval 33 to 52 is disordered; it reads AKKFQRQHMDSDGSPSSNPT. Lys-35 and Arg-38 together coordinate substrate. Catalysis depends on His-40, which acts as the Proton acceptor. Intrachain disulfides connect Cys-54-Cys-112, Cys-68-Cys-123, Cys-86-Cys-138, and Cys-93-Cys-100. Asn-62 is a glycosylation site (N-linked (GlcNAc...) asparagine). 69-73 contacts substrate; that stretch reads KPVNT. N-linked (GlcNAc...) asparagine glycosylation occurs at Asn-90. Residues Lys-94 and Arg-113 each contribute to the substrate site. N-linked (GlcNAc...) asparagine glycosylation is present at Asn-116. His-147 functions as the Proton donor in the catalytic mechanism.

The protein belongs to the pancreatic ribonuclease family. In terms of assembly, monomer. Interacts with and forms tight 1:1 complexes with RNH1. Dimerization of two such complexes may occur. Interaction with RNH1 inhibits this protein.

It localises to the secreted. The enzyme catalyses an [RNA] containing cytidine + H2O = an [RNA]-3'-cytidine-3'-phosphate + a 5'-hydroxy-ribonucleotide-3'-[RNA].. The catalysed reaction is an [RNA] containing uridine + H2O = an [RNA]-3'-uridine-3'-phosphate + a 5'-hydroxy-ribonucleotide-3'-[RNA].. Endonuclease that catalyzes the cleavage of RNA on the 3' side of pyrimidine nucleotides. Acts on single-stranded and double-stranded RNA. In Ateles geoffroyi (Black-handed spider monkey), this protein is Ribonuclease pancreatic (RNASE1).